Consider the following 738-residue polypeptide: Isocitrate dehydrogenase [NADP] (738 aa).

NADP(+)-binding residues include Asn83 and Ser85. D-threo-isocitrate-binding residues include Ser130, Asn133, Arg137, Arg143, and Lys253. Asn133 serves as a coordination point for NADP(+). Asp346 is a Mg(2+) binding site. D-threo-isocitrate is bound by residues Tyr416 and Arg543. Asp544 and Asp548 together coordinate Mg(2+). Residues Gly580, His585, Arg596, Asp598, and Arg645 each contribute to the NADP(+) site.

Belongs to the monomeric-type IDH family. As to quaternary structure, monomer. Mg(2+) is required as a cofactor. Requires Mn(2+) as cofactor.

Its subcellular location is the cytoplasm. The catalysed reaction is D-threo-isocitrate + NADP(+) = 2-oxoglutarate + CO2 + NADPH. Its activity is regulated as follows. Weakly inhibited by oxaloacetate, 2-oxoglutarate and citrate. Severely inhibited by oxaloacetate plus glyoxylate. Its function is as follows. Catalyzes the oxidative decarboxylation of isocitrate to 2-oxoglutarate and carbon dioxide with the concomitant reduction of NADP(+). Cannot use NAD(+). This chain is Isocitrate dehydrogenase [NADP], found in Corynebacterium glutamicum (strain ATCC 13032 / DSM 20300 / JCM 1318 / BCRC 11384 / CCUG 27702 / LMG 3730 / NBRC 12168 / NCIMB 10025 / NRRL B-2784 / 534).